Consider the following 448-residue polypeptide: Trk system potassium uptake protein TrkA homolog 1 (448 aa).

Residues 1-124 (MKAVIIGAGE…RAQVGVDLMI (124 aa)) form the RCK N-terminal 1 domain. NAD(+) contacts are provided by residues 7-11 (GAGEV), D29, 70-71 (TG), and R101. The RCK C-terminal 1 domain maps to 144–225 (IDAEMFAEGK…MEDLESVFGS (82 aa)). Residues 230-348 (RTRILLIGCG…FEMVGIDMAV (119 aa)) form the RCK N-terminal 2 domain. Residue 232–262 (RILLIGCGIVGMYLAKLIDKEENADLRIIEH) coordinates NAD(+). Residues 368–448 (QTLTTIEGER…AASEVEKYFK (81 aa)) enclose the RCK C-terminal 2 domain.

Part of a potassium transport system. The polypeptide is Trk system potassium uptake protein TrkA homolog 1 (trkA1) (Methanosarcina mazei (strain ATCC BAA-159 / DSM 3647 / Goe1 / Go1 / JCM 11833 / OCM 88) (Methanosarcina frisia)).